Reading from the N-terminus, the 737-residue chain is Acetylcholinesterase (737 aa).

The first 38 residues, 1–38 (MEIRGLLMGRLRLGRRMVPLGLLGVTALLLILPPFALV), serve as a signal peptide directing secretion. Positions 141–168 (HSGATPRRRGLTRRESNSDANDNDPLVV) are disordered. Residue N220 is glycosylated (N-linked (GlcNAc...) asparagine). C228 and C255 are joined by a disulfide. The active-site Acyl-ester intermediate is the S360. An intrachain disulfide couples C414 to C427. Catalysis depends on charge relay system residues E486 and H600. A disulfide bridge links C562 with C683. An N-linked (GlcNAc...) asparagine glycan is attached at N670.

It belongs to the type-B carboxylesterase/lipase family.

It is found in the synapse. It catalyses the reaction acetylcholine + H2O = choline + acetate + H(+). Functionally, rapidly hydrolyzes choline released into the synapse. The chain is Acetylcholinesterase (Ace) from Anopheles gambiae (African malaria mosquito).